Here is a 491-residue protein sequence, read N- to C-terminus: NADH-ubiquinone oxidoreductase chain 2 (491 aa).

14 consecutive transmembrane segments (helical) span residues 11 to 31, 38 to 58, 74 to 94, 106 to 126, 129 to 149, 161 to 181, 210 to 230, 238 to 258, 270 to 290, 298 to 318, 330 to 350, 375 to 395, 411 to 433, and 463 to 483; these read MIKY…SISI, VHII…VIGI, ELIK…IKMF, ITDE…ISME, NLIT…ILAL, LKYY…IVSI, IALI…HGWL, GMLM…MVLI, AIMF…VGTI, LIRF…LMLA, VYYL…IMGF, GAIV…MTNF, VYLT…NLVK, and IVLG…ILNV.

Belongs to the complex I subunit 2 family.

The protein localises to the mitochondrion inner membrane. It carries out the reaction a ubiquinone + NADH + 5 H(+)(in) = a ubiquinol + NAD(+) + 4 H(+)(out). Functionally, core subunit of the mitochondrial membrane respiratory chain NADH dehydrogenase (Complex I) that is believed to belong to the minimal assembly required for catalysis. Complex I functions in the transfer of electrons from NADH to the respiratory chain. The immediate electron acceptor for the enzyme is believed to be ubiquinone. The sequence is that of NADH-ubiquinone oxidoreductase chain 2 (nad2) from Dictyostelium citrinum (Slime mold).